Reading from the N-terminus, the 191-residue chain is Imidazoleglycerol-phosphate dehydratase (191 aa).

This sequence belongs to the imidazoleglycerol-phosphate dehydratase family.

It localises to the cytoplasm. It catalyses the reaction D-erythro-1-(imidazol-4-yl)glycerol 3-phosphate = 3-(imidazol-4-yl)-2-oxopropyl phosphate + H2O. Its pathway is amino-acid biosynthesis; L-histidine biosynthesis; L-histidine from 5-phospho-alpha-D-ribose 1-diphosphate: step 6/9. The polypeptide is Imidazoleglycerol-phosphate dehydratase (Methanococcoides burtonii (strain DSM 6242 / NBRC 107633 / OCM 468 / ACE-M)).